Consider the following 295-residue polypeptide: Probable protein phosphatase 2C 6 (295 aa).

The 272-residue stretch at 23-294 (QYAATHMQGW…DNMTCILIQF (272 aa)) folds into the PPM-type phosphatase domain. 4 residues coordinate Mn(2+): Asp57, Gly58, Asp237, and Asp285.

It belongs to the PP2C family. It depends on Mg(2+) as a cofactor. Mn(2+) serves as cofactor.

The protein resides in the membrane. The enzyme catalyses O-phospho-L-seryl-[protein] + H2O = L-seryl-[protein] + phosphate. It carries out the reaction O-phospho-L-threonyl-[protein] + H2O = L-threonyl-[protein] + phosphate. Enzyme with a broad specificity. This chain is Probable protein phosphatase 2C 6, found in Paramecium tetraurelia.